Consider the following 804-residue polypeptide: Endoplasmin (804 aa).

The first 21 residues, 1 to 21 (MRALWVLGLCCVLLTFGSVRA), serve as a signal peptide directing secretion. An SRT pseudosubstrate motif motif is present at residues 42–44 (SRT). Asparagine 62 is a glycosylation site (N-linked (GlcNAc...) asparagine). The residue at position 64 (serine 64) is a Phosphoserine. Asparagine 107 carries an N-linked (GlcNAc...) asparagine glycan. ATP is bound by residues asparagine 107, aspartate 149, and asparagine 162. Position 168 is an N6-(2-hydroxyisobutyryl)lysine (lysine 168). Serine 172 carries the post-translational modification Phosphoserine. Phenylalanine 199 is a binding site for ATP. The N-linked (GlcNAc...) asparagine glycan is linked to asparagine 217. A disordered region spans residues 288–323 (TVEEPMEEEEAAKEEKEESDDEAAVEEEEEEKKPKT). Residues 289 to 317 (VEEPMEEEEAAKEEKEESDDEAAVEEEEE) show a composition bias toward acidic residues. Phosphoserine is present on residues serine 306 and serine 403. Lysine 404 is subject to N6-succinyllysine. Residue asparagine 445 is glycosylated (N-linked (GlcNAc...) asparagine). The residue at position 447 (serine 447) is a Phosphoserine. At lysine 479 the chain carries N6-acetyllysine. N-linked (GlcNAc...) asparagine glycosylation is found at asparagine 481 and asparagine 502. Lysine 633 carries the N6-succinyllysine modification. The segment at 750–804 (DPDAKVEEEPEEEPEETTEDTTEDTEQDDDEEMDAGADEEEQETSETSTAEKDEL) is disordered. Residues 757–793 (EEPEEEPEETTEDTTEDTEQDDDEEMDAGADEEEQET) are compositionally biased toward acidic residues. The Prevents secretion from ER signature appears at 801–804 (KDEL).

The protein belongs to the heat shock protein 90 family. As to quaternary structure, homodimer; disulfide-linked. Component of an EIF2 complex at least composed of CELF1/CUGBP1, CALR, CALR3, EIF2S1, EIF2S2, HSP90B1 and HSPA5. Part of a large chaperone multiprotein complex comprising DNAJB11, HSP90B1, HSPA5, HYOU, PDIA2, PDIA4, PDIA6, PPIB, SDF2L1, UGGT1 and very small amounts of ERP29, but not, or at very low levels, CALR nor CANX. Interacts with AIMP1; regulates its retention in the endoplasmic reticulum. Hyperglycosylated form interacts with OS9; promoting its degradation by the endoplasmic reticulum associated degradation (ERAD). Interacts with CNPY3. This interaction is disrupted in the presence of ATP. Interacts with TLR4 and TLR9, but not with TLR3. Interacts with MZB1 in a calcium-dependent manner. Interacts with METTL23. Interacts with IL1B; the interaction facilitates cargo translocation into the ERGIC. Interacts with EIF2AK3. Phosphorylated by CK2. Post-translationally, N-glycosylated cotranslationally at Asn-217 by STT3A-containing OST-A complex: this glycosylation is constitutive. In response to various stress, 5 additional facultative sites (Asn-62, Asn-107, Asn-445, Asn-481 and Asn-502) can be glycosylated post-translationally by STT3B-containing OST-B complex, leading to a hyperglycosylated form that is degraded by the ER-associated degradation (ERAD) pathway. In normal conditions, the OST-A complex together with CCDC134 prevent glycosylation at facultative sites during protein folding, thereby preventing hyperglycosylation. Mechanistically, nascent HSP90B1 is tethered during translation to a specialized CCDC134-containing translocon that forms a microenvironment for its folding, in which STT3A associates with the SRT pseudosubstrate motif, and prevents access to facultative glycosylation sites until folding is completed, rendering its facultative sites inaccessible to the OST-B complex.

The protein resides in the endoplasmic reticulum lumen. The protein localises to the sarcoplasmic reticulum lumen. It localises to the melanosome. It catalyses the reaction ATP + H2O = ADP + phosphate + H(+). ATP-dependent chaperone involved in the processing of proteins in the endoplasmic reticulum, regulating their transport. Together with MESD, acts as a modulator of the Wnt pathway by promoting the folding of LRP6, a coreceptor of the canonical Wnt pathway. When associated with CNPY3, required for proper folding of Toll-like receptors. Promotes folding and trafficking of TLR4 to the cell surface. May participate in the unfolding of cytosolic leaderless cargos (lacking the secretion signal sequence) such as the interleukin 1/IL-1 to facilitate their translocation into the ERGIC (endoplasmic reticulum-Golgi intermediate compartment) and secretion; the translocation process is mediated by the cargo receptor TMED10. The polypeptide is Endoplasmin (HSP90B1) (Sus scrofa (Pig)).